A 752-amino-acid polypeptide reads, in one-letter code: Translation initiation factor IF-2 (752 aa).

Positions 26–167 (RQGMGVKSHM…QPTQRKDKPL (142 aa)) are disordered. Positions 34–47 (HMSSVTPDQAQQLR) are enriched in polar residues. The span at 72–81 (KQNNHQAQNH) shows a compositional bias: low complexity. Residues 83 to 96 (QHHDHDKTQNERPQ) show a composition bias toward basic and acidic residues. A compositionally biased stretch (polar residues) spans 101 to 129 (SRSNNGTKDNNQHQNNGGRFGGSLNNDQG). Residues 131–150 (NGKRFNKKNKKNKKHNKNKR) show a composition bias toward basic residues. Positions 151 to 167 (LREVAHKQPTQRKDKPL) are enriched in basic and acidic residues. Positions 253-422 (TRPAVVTVMG…LLQAEMLELK (170 aa)) constitute a tr-type G domain. Positions 262–269 (GHVDHGKT) are G1. A GTP-binding site is contributed by 262-269 (GHVDHGKT). The segment at 287-291 (GITQE) is G2. A G3 region spans residues 308–311 (DTPG). Residues 308–312 (DTPGH) and 362–365 (NKID) each bind GTP. Positions 362 to 365 (NKID) are G4. The segment at 398–400 (SAK) is G5.

This sequence belongs to the TRAFAC class translation factor GTPase superfamily. Classic translation factor GTPase family. IF-2 subfamily.

The protein localises to the cytoplasm. Functionally, one of the essential components for the initiation of protein synthesis. Protects formylmethionyl-tRNA from spontaneous hydrolysis and promotes its binding to the 30S ribosomal subunits. Also involved in the hydrolysis of GTP during the formation of the 70S ribosomal complex. This is Translation initiation factor IF-2 from Limosilactobacillus reuteri (strain DSM 20016) (Lactobacillus reuteri).